A 633-amino-acid polypeptide reads, in one-letter code: Chaperone protein DnaK (633 aa).

At threonine 198 the chain carries Phosphothreonine; by autocatalysis.

It belongs to the heat shock protein 70 family.

Functionally, acts as a chaperone. This chain is Chaperone protein DnaK, found in Rhodopseudomonas palustris (strain HaA2).